The following is a 278-amino-acid chain: 4-hydroxy-tetrahydrodipicolinate reductase (278 aa).

NAD(+) is bound by residues 13 to 18 (GAAGKM) and 111 to 113 (GTT). Catalysis depends on H167, which acts as the Proton donor/acceptor. H168 serves as a coordination point for (S)-2,3,4,5-tetrahydrodipicolinate. The Proton donor role is filled by K171. Residue 177-178 (GT) participates in (S)-2,3,4,5-tetrahydrodipicolinate binding.

It belongs to the DapB family.

It localises to the cytoplasm. It carries out the reaction (S)-2,3,4,5-tetrahydrodipicolinate + NAD(+) + H2O = (2S,4S)-4-hydroxy-2,3,4,5-tetrahydrodipicolinate + NADH + H(+). The catalysed reaction is (S)-2,3,4,5-tetrahydrodipicolinate + NADP(+) + H2O = (2S,4S)-4-hydroxy-2,3,4,5-tetrahydrodipicolinate + NADPH + H(+). Its pathway is amino-acid biosynthesis; L-lysine biosynthesis via DAP pathway; (S)-tetrahydrodipicolinate from L-aspartate: step 4/4. In terms of biological role, catalyzes the conversion of 4-hydroxy-tetrahydrodipicolinate (HTPA) to tetrahydrodipicolinate. The chain is 4-hydroxy-tetrahydrodipicolinate reductase from Nostoc sp. (strain PCC 7120 / SAG 25.82 / UTEX 2576).